The sequence spans 259 residues: uncharacterized protein (259 aa).

The 231-residue stretch at 19-249 (TKIPGAKYVI…DEVINTIKKK (231 aa)) folds into the Radical SAM core domain. 3 residues coordinate [4Fe-4S] cluster: Cys34, Cys38, and Cys41.

[4Fe-4S] cluster is required as a cofactor.

This is an uncharacterized protein from Methanocaldococcus jannaschii (strain ATCC 43067 / DSM 2661 / JAL-1 / JCM 10045 / NBRC 100440) (Methanococcus jannaschii).